Here is a 197-residue protein sequence, read N- to C-terminus: Protein-methionine-sulfoxide reductase heme-binding subunit MsrQ (197 aa).

The next 6 membrane-spanning stretches (helical) occupy residues 10 to 30 (IFIV…MNLL), 42 to 62 (LGLG…LQKL), 75 to 95 (LGLW…FFIL), 110 to 130 (PYII…VTSN), 147 to 167 (LVYA…RSDL), and 169 to 189 (EWAI…PAVA).

Belongs to the MsrQ family. In terms of assembly, heterodimer of a catalytic subunit (MsrP) and a heme-binding subunit (MsrQ). FMN serves as cofactor. Heme b is required as a cofactor.

Its subcellular location is the cell inner membrane. Functionally, part of the MsrPQ system that repairs oxidized periplasmic proteins containing methionine sulfoxide residues (Met-O), using respiratory chain electrons. Thus protects these proteins from oxidative-stress damage caused by reactive species of oxygen and chlorine generated by the host defense mechanisms. MsrPQ is essential for the maintenance of envelope integrity under bleach stress, rescuing a wide series of structurally unrelated periplasmic proteins from methionine oxidation. MsrQ provides electrons for reduction to the reductase catalytic subunit MsrP, using the quinone pool of the respiratory chain. This chain is Protein-methionine-sulfoxide reductase heme-binding subunit MsrQ, found in Pseudomonas putida (strain ATCC 47054 / DSM 6125 / CFBP 8728 / NCIMB 11950 / KT2440).